The sequence spans 84 residues: Beta-defensin 119 (84 aa).

Residues 1-21 form the signal peptide; it reads MKLLYLFLAILLAIEEPVISG. Disulfide bonds link Cys28–Cys55, Cys35–Cys49, and Cys39–Cys56.

This sequence belongs to the beta-defensin family. As to expression, abundant expression in the male reproductive tract only. Abundant expressed in testis and the caput region of epididymis, but low in the corpus region.

It localises to the secreted. Functionally, has antibacterial activity. This Homo sapiens (Human) protein is Beta-defensin 119 (DEFB119).